Here is a 503-residue protein sequence, read N- to C-terminus: MSHQEQLHKPNRQQFSEKQFIAFAFNYVAGFGFISVVLTMFKLGPFSYLILGLAALGILGVMLSFSRLSIICGSKAYGGSYLIAKKALGVKTITARFFTFLSGWNVSLTGPFNGLIVPAVLVLSFADIKAVKDNNGALIGLLVGGFVLFGALNFISLFGLKMNKNAILFFAIVKWVVVLGGLILGIYLIGTNHGHGFVENNTLGEHIEDLSFLKVISTTVGMLVAFAGTEDLTAITPDVKSKNIRKCFLLMFGAVTLLYLIGFVIISGISGLNGYGLDGKEKNEKAINTFGSIYFQAGGKYLGIPLLVIFGLGFLLNSLASRLGMTITTARKYVALAQDGFLPSFINEQNKHHEYHKAVWASNIMTLAVMVLMIIVPFLPNDENPGKQLVMFDAISVLVEVAIELAVLISLIQYFITYIFFFMILAKKEGSASVSWWEIASYGVSFAIITVLLFVNLFPITAWKNTNTFKLSILAAFFALGIGFFIHSEIKHKGQLVKSVECN.

The next 12 helical transmembrane spans lie at 20–40, 43–63, 106–126, 138–158, 166–186, 215–235, 249–269, 301–321, 359–379, 405–425, 443–463, and 468–488; these read FIAFAFNYVAGFGFISVVLTM, LGPFSYLILGLAALGILGVML, VSLTGPFNGLIVPAVLVLSFA, LIGLLVGGFVLFGALNFISLF, AILFFAIVKWVVVLGGLILGI, VISTTVGMLVAFAGTEDLTAI, LLMFGAVTLLYLIGFVIISGI, YLGIPLLVIFGLGFLLNSLAS, VWASNIMTLAVMVLMIIVPFL, LAVLISLIQYFITYIFFFMIL, GVSFAIITVLLFVNLFPITAW, and TFKLSILAAFFALGIGFFIHS.

It to M.genitalium MG225.

Its subcellular location is the cell membrane. This is an uncharacterized protein from Mycoplasma pneumoniae (strain ATCC 29342 / M129 / Subtype 1) (Mycoplasmoides pneumoniae).